A 229-amino-acid chain; its full sequence is Uracil-DNA glycosylase (229 aa).

D64 serves as the catalytic Proton acceptor.

This sequence belongs to the uracil-DNA glycosylase (UDG) superfamily. UNG family.

The protein resides in the cytoplasm. It catalyses the reaction Hydrolyzes single-stranded DNA or mismatched double-stranded DNA and polynucleotides, releasing free uracil.. In terms of biological role, excises uracil residues from the DNA which can arise as a result of misincorporation of dUMP residues by DNA polymerase or due to deamination of cytosine. This is Uracil-DNA glycosylase from Geobacillus kaustophilus (strain HTA426).